A 217-amino-acid polypeptide reads, in one-letter code: Mitochondrial inner membrane protease ATP23 (217 aa).

The interval 1 to 21 (MATPTPRHQETPQETTERERC) is disordered. Positions 7–21 (RHQETPQETTERERC) are enriched in basic and acidic residues. Residue H118 coordinates a divalent metal cation. Residue E119 is part of the active site. H122 is a binding site for a divalent metal cation.

The protein belongs to the peptidase M76 family.

It localises to the mitochondrion inner membrane. Its function is as follows. Has a dual role in the assembly of mitochondrial ATPase. Acts as a protease that removes N-terminal residues of mitochondrial ATPase CF(0) subunit 6 at the intermembrane space side. Also involved in the correct assembly of the membrane-embedded ATPase CF(0) particle, probably mediating association of subunit 6 with the subunit 9 ring. The protein is Mitochondrial inner membrane protease ATP23 (ATP23) of Mycosarcoma maydis (Corn smut fungus).